A 220-amino-acid polypeptide reads, in one-letter code: Pyridoxine/pyridoxamine 5'-phosphate oxidase (220 aa).

Residues 8-11 (RKSY) and Lys66 each bind substrate. Residues 61–66 (RVVLIK), 76–77 (FT), Arg82, and Lys83 contribute to the FMN site. The substrate site is built by Tyr123, Arg127, and Ser131. FMN is bound by residues 140 to 141 (QS) and Trp184. 190 to 192 (RLH) lines the substrate pocket. Arg194 serves as a coordination point for FMN.

The protein belongs to the pyridoxamine 5'-phosphate oxidase family. In terms of assembly, homodimer. Requires FMN as cofactor.

It carries out the reaction pyridoxamine 5'-phosphate + O2 + H2O = pyridoxal 5'-phosphate + H2O2 + NH4(+). The catalysed reaction is pyridoxine 5'-phosphate + O2 = pyridoxal 5'-phosphate + H2O2. It functions in the pathway cofactor metabolism; pyridoxal 5'-phosphate salvage; pyridoxal 5'-phosphate from pyridoxamine 5'-phosphate: step 1/1. The protein operates within cofactor metabolism; pyridoxal 5'-phosphate salvage; pyridoxal 5'-phosphate from pyridoxine 5'-phosphate: step 1/1. Its function is as follows. Catalyzes the oxidation of either pyridoxine 5'-phosphate (PNP) or pyridoxamine 5'-phosphate (PMP) into pyridoxal 5'-phosphate (PLP). The sequence is that of Pyridoxine/pyridoxamine 5'-phosphate oxidase from Albidiferax ferrireducens (strain ATCC BAA-621 / DSM 15236 / T118) (Rhodoferax ferrireducens).